Consider the following 137-residue polypeptide: Small ribosomal subunit protein uS12 (137 aa).

D102 carries the 3-methylthioaspartic acid modification.

Belongs to the universal ribosomal protein uS12 family. In terms of assembly, part of the 30S ribosomal subunit. Contacts proteins S8 and S17. May interact with IF1 in the 30S initiation complex.

Functionally, with S4 and S5 plays an important role in translational accuracy. In terms of biological role, interacts with and stabilizes bases of the 16S rRNA that are involved in tRNA selection in the A site and with the mRNA backbone. Located at the interface of the 30S and 50S subunits, it traverses the body of the 30S subunit contacting proteins on the other side and probably holding the rRNA structure together. The combined cluster of proteins S8, S12 and S17 appears to hold together the shoulder and platform of the 30S subunit. The sequence is that of Small ribosomal subunit protein uS12 from Mycoplasmopsis agalactiae (strain NCTC 10123 / CIP 59.7 / PG2) (Mycoplasma agalactiae).